Here is a 119-residue protein sequence, read N- to C-terminus: UPF0102 protein CGSHiGG_01960 (119 aa).

The protein belongs to the UPF0102 family.

The polypeptide is UPF0102 protein CGSHiGG_01960 (Haemophilus influenzae (strain PittGG)).